Consider the following 398-residue polypeptide: MSDVLLVLNAGSSSIKFALYEAHTEPTADHLICEGGIGSLGHRPHFKVVNSDGSTRYDTYLPEGTSHDDAMAVLIGWIETTFPEHRLSAVGHRVVHGGALFDGPVDVTPEVIAQLRAFDRLAPLHQPHNVSAIEALAKLHPSLPQIACFDTAFHHRLPEVATAFALPRELTEQGVRRYGFHGLSYEYIAGRLPDVAGQAVADGRVVVAHLGAGASMCAMLRCRSIATTMGFTALDGLMMGSRCGELDPGVVLYLLEEKSMTAREIEDLLYRESGLLGVSGISDDMRTLLASDDPHACEAIELFVYRIARELGSLAAALGGLDALVFTGGIGEHASEIRRRVCEQAAWLGVTLDPDANASLSGAGRISAPDSKVSAWAIPTDEDLMIARHVWRLADGGR.

Asparagine 9 serves as a coordination point for Mg(2+). Position 16 (lysine 16) interacts with ATP. Arginine 93 is a substrate binding site. The Proton donor/acceptor role is filled by aspartate 150. ATP contacts are provided by residues 209 to 213 (HLGAG), 284 to 286 (DMR), and 329 to 333 (GIGEH). A Mg(2+)-binding site is contributed by glutamate 382.

The protein belongs to the acetokinase family. Homodimer. Requires Mg(2+) as cofactor. The cofactor is Mn(2+).

It is found in the cytoplasm. The enzyme catalyses acetate + ATP = acetyl phosphate + ADP. It participates in metabolic intermediate biosynthesis; acetyl-CoA biosynthesis; acetyl-CoA from acetate: step 1/2. Functionally, catalyzes the formation of acetyl phosphate from acetate and ATP. Can also catalyze the reverse reaction. In Rhodopseudomonas palustris (strain ATCC BAA-98 / CGA009), this protein is Acetate kinase.